The primary structure comprises 82 residues: UPF0410 protein YeaQ (82 aa).

Helical transmembrane passes span 26–46 and 57–77; these read GGGF…GGWI and GFNF…LFIY.

Belongs to the UPF0410 family.

Its subcellular location is the cell inner membrane. The sequence is that of UPF0410 protein YeaQ (yeaQ) from Escherichia coli O157:H7.